We begin with the raw amino-acid sequence, 336 residues long: Casein kinase II subunit alpha (336 aa).

Positions 32 to 317 constitute a Protein kinase domain; that stretch reads YEVVRKIGRG…AKEAMAHPYF (286 aa). Residues 38–46 and lysine 61 contribute to the ATP site; that span reads IGRGKYSEV. Aspartate 149 acts as the Proton acceptor in catalysis.

The protein belongs to the protein kinase superfamily. Ser/Thr protein kinase family. CK2 subfamily. In terms of assembly, tetramer composed of two alpha chains, one beta chain and one beta' chain.

It catalyses the reaction L-seryl-[protein] + ATP = O-phospho-L-seryl-[protein] + ADP + H(+). The catalysed reaction is L-threonyl-[protein] + ATP = O-phospho-L-threonyl-[protein] + ADP + H(+). In terms of biological role, catalytic subunit of a constitutively active serine/threonine-protein kinase complex that phosphorylates a large number of substrates containing acidic residues C-terminal to the phosphorylated serine or threonine. Phosphorylates the frq clock protein thus regulating the circadian clock. The protein is Casein kinase II subunit alpha (cka) of Neurospora crassa (strain ATCC 24698 / 74-OR23-1A / CBS 708.71 / DSM 1257 / FGSC 987).